Consider the following 660-residue polypeptide: Acetyl-coenzyme A synthetase (660 aa).

Residues 197-200 (RGGK) and Thr-317 each bind CoA. Residues 397–399 (GEP), 421–426 (DTFWQT), Asp-512, and Arg-528 contribute to the ATP site. Ser-536 is a CoA binding site. ATP is bound at residue Arg-539. Residues Val-550 and Val-555 each coordinate Mg(2+). Lys-625 bears the N6-acetyllysine mark.

Belongs to the ATP-dependent AMP-binding enzyme family. Requires Mg(2+) as cofactor. Acetylated. Deacetylation by the SIR2-homolog deacetylase activates the enzyme.

The enzyme catalyses acetate + ATP + CoA = acetyl-CoA + AMP + diphosphate. Functionally, catalyzes the conversion of acetate into acetyl-CoA (AcCoA), an essential intermediate at the junction of anabolic and catabolic pathways. AcsA undergoes a two-step reaction. In the first half reaction, AcsA combines acetate with ATP to form acetyl-adenylate (AcAMP) intermediate. In the second half reaction, it can then transfer the acetyl group from AcAMP to the sulfhydryl group of CoA, forming the product AcCoA. This Ralstonia pickettii (strain 12J) protein is Acetyl-coenzyme A synthetase.